Consider the following 123-residue polypeptide: Large ribosomal subunit protein uL22c (123 aa).

It belongs to the universal ribosomal protein uL22 family. In terms of assembly, part of the 50S ribosomal subunit.

The protein localises to the plastid. It is found in the chloroplast. Functionally, this protein binds specifically to 23S rRNA. The globular domain of the protein is located near the polypeptide exit tunnel on the outside of the subunit, while an extended beta-hairpin is found that lines the wall of the exit tunnel in the center of the 70S ribosome. This chain is Large ribosomal subunit protein uL22c (rpl22), found in Chara vulgaris (Common stonewort).